The primary structure comprises 245 residues: Octanoyltransferase (245 aa).

One can recognise a BPL/LPL catalytic domain in the interval 54–238; that stretch reads GEATELVWLL…AFENIFGETR (185 aa). Substrate contacts are provided by residues 92-99, 167-169, and 180-182; these read RGGQLTYH, AIG, and GIA. C198 (acyl-thioester intermediate) is an active-site residue.

Belongs to the LipB family.

It is found in the cytoplasm. The enzyme catalyses octanoyl-[ACP] + L-lysyl-[protein] = N(6)-octanoyl-L-lysyl-[protein] + holo-[ACP] + H(+). The protein operates within protein modification; protein lipoylation via endogenous pathway; protein N(6)-(lipoyl)lysine from octanoyl-[acyl-carrier-protein]: step 1/2. Catalyzes the transfer of endogenously produced octanoic acid from octanoyl-acyl-carrier-protein onto the lipoyl domains of lipoate-dependent enzymes. Lipoyl-ACP can also act as a substrate although octanoyl-ACP is likely to be the physiological substrate. This Rhodopseudomonas palustris (strain ATCC BAA-98 / CGA009) protein is Octanoyltransferase.